A 75-amino-acid polypeptide reads, in one-letter code: RNA-binding protein KhpA (75 aa).

A KH domain is found at 29–75; that stretch reads SIILELKVAPEDMGKVIGKQGRIAKAIRTVIKAAAVKENKRVVVEII.

The protein belongs to the KhpA RNA-binding protein family. Forms a complex with KhpB.

Its subcellular location is the cytoplasm. Functionally, a probable RNA chaperone. Forms a complex with KhpB which binds to cellular RNA and controls its expression. Plays a role in peptidoglycan (PG) homeostasis and cell length regulation. The chain is RNA-binding protein KhpA from Clostridium acetobutylicum (strain ATCC 824 / DSM 792 / JCM 1419 / IAM 19013 / LMG 5710 / NBRC 13948 / NRRL B-527 / VKM B-1787 / 2291 / W).